Reading from the N-terminus, the 222-residue chain is ATP-dependent dethiobiotin synthetase BioD (222 aa).

An ATP-binding site is contributed by 12–17 (DVGKTI). Position 16 (Thr-16) interacts with Mg(2+). The active site involves Lys-37. Substrate is bound at residue Thr-41. ATP-binding positions include Asp-49, 107-110 (EGAG), 167-168 (GS), and 197-199 (AEG). Mg(2+) contacts are provided by Asp-49 and Glu-107.

Belongs to the dethiobiotin synthetase family. Homodimer. Requires Mg(2+) as cofactor.

The protein resides in the cytoplasm. It catalyses the reaction (7R,8S)-7,8-diammoniononanoate + CO2 + ATP = (4R,5S)-dethiobiotin + ADP + phosphate + 3 H(+). It functions in the pathway cofactor biosynthesis; biotin biosynthesis; biotin from 7,8-diaminononanoate: step 1/2. In terms of biological role, catalyzes a mechanistically unusual reaction, the ATP-dependent insertion of CO2 between the N7 and N8 nitrogen atoms of 7,8-diaminopelargonic acid (DAPA, also called 7,8-diammoniononanoate) to form a ureido ring. The chain is ATP-dependent dethiobiotin synthetase BioD from Corynebacterium diphtheriae (strain ATCC 700971 / NCTC 13129 / Biotype gravis).